Consider the following 188-residue polypeptide: Photosystem I assembly protein Ycf4 (188 aa).

2 consecutive transmembrane segments (helical) span residues 26–48 (MLWA…SSYF) and 68–90 (AALT…VFFL).

This sequence belongs to the Ycf4 family.

Its subcellular location is the cellular thylakoid membrane. Functionally, seems to be required for the assembly of the photosystem I complex. This is Photosystem I assembly protein Ycf4 from Picosynechococcus sp. (strain ATCC 27264 / PCC 7002 / PR-6) (Agmenellum quadruplicatum).